The chain runs to 286 residues: NAD kinase (286 aa).

Asp74 (proton acceptor) is an active-site residue. Residues 74–75 (DG), 148–149 (ND), Asp178, Ala186, 189–194 (TAYNLS), and Gln244 contribute to the NAD(+) site.

This sequence belongs to the NAD kinase family. A divalent metal cation serves as cofactor.

Its subcellular location is the cytoplasm. It carries out the reaction NAD(+) + ATP = ADP + NADP(+) + H(+). Involved in the regulation of the intracellular balance of NAD and NADP, and is a key enzyme in the biosynthesis of NADP. Catalyzes specifically the phosphorylation on 2'-hydroxyl of the adenosine moiety of NAD to yield NADP. In Campylobacter jejuni subsp. jejuni serotype O:6 (strain 81116 / NCTC 11828), this protein is NAD kinase.